Here is a 315-residue protein sequence, read N- to C-terminus: Acetyl-coenzyme A carboxylase carboxyl transferase subunit alpha (315 aa).

The CoA carboxyltransferase C-terminal domain maps to 39-293 (RLQDKSSTLT…RGELASQLAM (255 aa)).

Belongs to the AccA family. As to quaternary structure, acetyl-CoA carboxylase is a heterohexamer composed of biotin carboxyl carrier protein (AccB), biotin carboxylase (AccC) and two subunits each of ACCase subunit alpha (AccA) and ACCase subunit beta (AccD).

Its subcellular location is the cytoplasm. The catalysed reaction is N(6)-carboxybiotinyl-L-lysyl-[protein] + acetyl-CoA = N(6)-biotinyl-L-lysyl-[protein] + malonyl-CoA. The protein operates within lipid metabolism; malonyl-CoA biosynthesis; malonyl-CoA from acetyl-CoA: step 1/1. Functionally, component of the acetyl coenzyme A carboxylase (ACC) complex. First, biotin carboxylase catalyzes the carboxylation of biotin on its carrier protein (BCCP) and then the CO(2) group is transferred by the carboxyltransferase to acetyl-CoA to form malonyl-CoA. This is Acetyl-coenzyme A carboxylase carboxyl transferase subunit alpha from Pseudomonas fluorescens (strain SBW25).